A 683-amino-acid polypeptide reads, in one-letter code: MEHVRVIFFFFACVLKIVPFICLAQKDKYEFPPGFNCVASGGNFTANSSFAGNLNGLVSSLSSLTSKPYGFYNLSSGDSSGERAYAIGLCRREVKRDDCLSCIQIAARNLIEQCPLTNQAVVWYTHCMFRYSNMIIYGRKETTPTLSFQAGKNISANRDEFDRLQIELLDRLKGIAAAGGPNRKYAQGSGSGVAGYPQFYGSAHCTPDLSEQDCNDCLVFGFEKIPGCCAGQVGLRWFFPSCSYRFETWRFYEFDADLEPDPPAIQPADSPTSAARTERTGKGKGGSKVIVAIVIPIVFVALFAICLCLLLKWKKNKSVGRVKGNKHNLLLLVIVILLQKDEFSDSLVVDFETLKAATDNFSPENELGRGGFGSVYKGVFSGGQEIAVKRLSCTSGQGDSEFKNEILLLAKLQHRNLVRLLGFCIEGQERILVYEFIKNASLDNFIFDLKKRQLLDWGVRYKMIGGVARGLLYLHEDSRYRIIHRDLKASNILLDQEMNPKIADFGLAKLYDTDQTSTHRFTSKIAGTYGYMAPEYAIYGQFSVKTDVFSFGVLVIEIITGKGNNNGRSNDDEEAENLLSWVWRCWREDIILSVIDPSLTTGSRSEILRCIHIGLLCVQESPASRPTMDSVALMLNSYSYTLPTPSRPAFALESVMPSMNVSSSTEPLLMSLNDVTVSELSPR.

An N-terminal signal peptide occupies residues 1–24 (MEHVRVIFFFFACVLKIVPFICLA). Topologically, residues 25–288 (QKDKYEFPPG…RTGKGKGGSK (264 aa)) are extracellular. 2 consecutive Gnk2-homologous domains span residues 32–136 (PPGF…NMII) and 142–251 (TTPT…TWRF). N43, N47, N73, and N153 each carry an N-linked (GlcNAc...) asparagine glycan. The disordered stretch occupies residues 263 to 283 (PAIQPADSPTSAARTERTGKG). Residues 289 to 309 (VIVAIVIPIVFVALFAICLCL) traverse the membrane as a helical segment. The Cytoplasmic portion of the chain corresponds to 310 to 683 (LLKWKKNKSV…DVTVSELSPR (374 aa)). Residues 361–641 (FSPENELGRG…ALMLNSYSYT (281 aa)) enclose the Protein kinase domain. ATP is bound by residues 367-375 (LGRGGFGSV) and K389. Residue Y434 is modified to Phosphotyrosine. D486 (proton acceptor) is an active-site residue. At S490 the chain carries Phosphoserine. T528 carries the phosphothreonine modification. Y536 carries the post-translational modification Phosphotyrosine.

The protein belongs to the protein kinase superfamily. Ser/Thr protein kinase family. CRK subfamily.

The protein localises to the membrane. The enzyme catalyses L-seryl-[protein] + ATP = O-phospho-L-seryl-[protein] + ADP + H(+). It catalyses the reaction L-threonyl-[protein] + ATP = O-phospho-L-threonyl-[protein] + ADP + H(+). The polypeptide is Cysteine-rich receptor-like protein kinase 28 (CRK28) (Arabidopsis thaliana (Mouse-ear cress)).